The following is a 473-amino-acid chain: Argininosuccinate lyase (473 aa).

It belongs to the lyase 1 family. Argininosuccinate lyase subfamily.

The protein localises to the cytoplasm. The catalysed reaction is 2-(N(omega)-L-arginino)succinate = fumarate + L-arginine. It functions in the pathway amino-acid biosynthesis; L-arginine biosynthesis; L-arginine from L-ornithine and carbamoyl phosphate: step 3/3. This is Argininosuccinate lyase from Nocardia farcinica (strain IFM 10152).